A 161-amino-acid chain; its full sequence is Allophycocyanin beta chain (161 aa).

At Asn71 the chain carries N4-methylasparagine. Cys81 contacts (2R,3E)-phycocyanobilin.

The protein belongs to the phycobiliprotein family. As to quaternary structure, heterodimer of an alpha and a beta chain. In terms of processing, contains one covalently linked phycocyanobilin chromophore.

Its subcellular location is the cellular thylakoid membrane. Functionally, light-harvesting photosynthetic bile pigment-protein from the phycobiliprotein complex. Allophycocyanin has a maximum absorption at approximately 650 nanometers. The sequence is that of Allophycocyanin beta chain (apcB) from Arthrospira platensis (Spirulina platensis).